Reading from the N-terminus, the 148-residue chain is Large ribosomal subunit protein uL15 (148 aa).

The disordered stretch occupies residues 1-61 (MELNELRPAV…GGQMPMQRRL (61 aa)). Basic residues predominate over residues 30-39 (TATKGHKGQK).

Belongs to the universal ribosomal protein uL15 family. Part of the 50S ribosomal subunit.

Binds to the 23S rRNA. The protein is Large ribosomal subunit protein uL15 of Geobacter sulfurreducens (strain ATCC 51573 / DSM 12127 / PCA).